The primary structure comprises 104 residues: Type IV secretion system protein PtlB homolog (104 aa).

A helical transmembrane segment spans residues I30–L50.

This sequence belongs to the virB3 family.

It is found in the cell membrane. The protein is Type IV secretion system protein PtlB homolog (ptlB) of Bordetella parapertussis (strain 12822 / ATCC BAA-587 / NCTC 13253).